Here is a 258-residue protein sequence, read N- to C-terminus: UPF0246 protein PM0066 (258 aa).

Belongs to the UPF0246 family.

This chain is UPF0246 protein PM0066, found in Pasteurella multocida (strain Pm70).